We begin with the raw amino-acid sequence, 178 residues long: FXYD domain-containing ion transport regulator 5 (178 aa).

Positions 1–21 (MSLSSRLCLLTIVALILPSRG) are cleaved as a signal peptide. The span at 21-59 (GQTPKKPTSIFTADQTSATTRDNVPDPDQTSPGVQTTPL) shows a compositional bias: polar residues. Residues 21–130 (GQTPKKPTSI…SYIEHPLDSN (110 aa)) are disordered. The Extracellular segment spans residues 22–145 (QTPKKPTSIF…YYDDTTLRKR (124 aa)). The span at 67–79 (TGSQTAAQTETQQ) shows a compositional bias: low complexity. The segment covering 80 to 100 (LTKMATSNPVSDPGPHTSSKK) has biased composition (polar residues). The chain crosses the membrane as a helical span at residues 146-166 (GLLVAAVLFITGIIILTSGKC). Residues 167–178 (RQLSQFCLNRHR) are Cytoplasmic-facing.

It belongs to the FXYD family. Regulatory subunit of the sodium/potassium-transporting ATPase which is composed of a catalytic alpha subunit, a non-catalytic beta subunit and an additional regulatory subunit. The regulatory subunit, a member of the FXYD protein family, modulates the enzymatic activity in a tissue- and isoform-specific way by changing affinities of the Na+/K+-ATPase toward Na(+), K(+) or ATP. In terms of processing, glycosylated. Expressed mainly in epithelial tissue, such as lung, intestine and kidney. Not detected in brain, liver, muscle, and heart.

It is found in the cell membrane. The protein localises to the basolateral cell membrane. Associates with and regulates the activity of the sodium/potassium-transporting ATPase (NKA) which catalyzes the hydrolysis of ATP coupled with the exchange of Na(+) and K(+) ions across the plasma membrane. May increase NKA activity by increasing the apparent affinity for Na(+). Involved in down-regulation of E-cadherin which results in reduced cell adhesion. Promotes metastasis. The chain is FXYD domain-containing ion transport regulator 5 (Fxyd5) from Mus musculus (Mouse).